Here is a 453-residue protein sequence, read N- to C-terminus: Bifunctional protein GlmU (453 aa).

The tract at residues 1–225 is pyrophosphorylase; sequence MNIVILAAGT…EWETLGVNSK (225 aa). Residues 6-9, lysine 20, glutamine 71, 76-77, 98-100, glycine 135, glutamate 150, asparagine 165, and asparagine 223 contribute to the UDP-N-acetyl-alpha-D-glucosamine site; these read LAAG, GT, and YGD. Aspartate 100 provides a ligand contact to Mg(2+). A Mg(2+)-binding site is contributed by asparagine 223. Positions 226 to 246 are linker; sequence QQLAELERIHQRNVADALLVA. The segment at 247-453 is N-acetyltransferase; sequence GVTLADPARL…GYVRPTKKKS (207 aa). Residues arginine 329 and lysine 347 each coordinate UDP-N-acetyl-alpha-D-glucosamine. Histidine 359 acts as the Proton acceptor in catalysis. The UDP-N-acetyl-alpha-D-glucosamine site is built by tyrosine 362 and asparagine 373. Residues alanine 376, 382 to 383, serine 401, and alanine 419 each bind acetyl-CoA; that span reads NY.

This sequence in the N-terminal section; belongs to the N-acetylglucosamine-1-phosphate uridyltransferase family. The protein in the C-terminal section; belongs to the transferase hexapeptide repeat family. In terms of assembly, homotrimer. The cofactor is Mg(2+).

It is found in the cytoplasm. It catalyses the reaction alpha-D-glucosamine 1-phosphate + acetyl-CoA = N-acetyl-alpha-D-glucosamine 1-phosphate + CoA + H(+). The enzyme catalyses N-acetyl-alpha-D-glucosamine 1-phosphate + UTP + H(+) = UDP-N-acetyl-alpha-D-glucosamine + diphosphate. It participates in nucleotide-sugar biosynthesis; UDP-N-acetyl-alpha-D-glucosamine biosynthesis; N-acetyl-alpha-D-glucosamine 1-phosphate from alpha-D-glucosamine 6-phosphate (route II): step 2/2. It functions in the pathway nucleotide-sugar biosynthesis; UDP-N-acetyl-alpha-D-glucosamine biosynthesis; UDP-N-acetyl-alpha-D-glucosamine from N-acetyl-alpha-D-glucosamine 1-phosphate: step 1/1. The protein operates within bacterial outer membrane biogenesis; LPS lipid A biosynthesis. Its function is as follows. Catalyzes the last two sequential reactions in the de novo biosynthetic pathway for UDP-N-acetylglucosamine (UDP-GlcNAc). The C-terminal domain catalyzes the transfer of acetyl group from acetyl coenzyme A to glucosamine-1-phosphate (GlcN-1-P) to produce N-acetylglucosamine-1-phosphate (GlcNAc-1-P), which is converted into UDP-GlcNAc by the transfer of uridine 5-monophosphate (from uridine 5-triphosphate), a reaction catalyzed by the N-terminal domain. The protein is Bifunctional protein GlmU of Paraburkholderia xenovorans (strain LB400).